The sequence spans 528 residues: Peptide chain release factor 3 (528 aa).

The tr-type G domain occupies Asp-10 to Arg-278. Residues Ser-19–Thr-26, Asp-87–His-91, and Asn-141–Asp-144 each bind GTP.

The protein belongs to the TRAFAC class translation factor GTPase superfamily. Classic translation factor GTPase family. PrfC subfamily.

It localises to the cytoplasm. Functionally, increases the formation of ribosomal termination complexes and stimulates activities of RF-1 and RF-2. It binds guanine nucleotides and has strong preference for UGA stop codons. It may interact directly with the ribosome. The stimulation of RF-1 and RF-2 is significantly reduced by GTP and GDP, but not by GMP. The polypeptide is Peptide chain release factor 3 (Syntrophotalea carbinolica (strain DSM 2380 / NBRC 103641 / GraBd1) (Pelobacter carbinolicus)).